The chain runs to 511 residues: Putative polyol transporter 1 (511 aa).

The next 12 helical transmembrane spans lie at 27-47 (FACA…IGVM), 63-83 (VQLE…SGAA), 94-114 (YTIV…GFAT), 124-144 (FVAG…TAEV), 151-171 (GFLT…GYVS), 186-206 (FMLG…LAMP), 284-304 (ILIA…DAVV), 324-344 (LATV…TCVV), 351-371 (ALLL…GTSL), 384-404 (WAIG…SIGA), 424-444 (GASL…MTFL), and 454-474 (GAFL…FTFL).

It belongs to the major facilitator superfamily. Sugar transporter (TC 2.A.1.1) family.

Its subcellular location is the membrane. In terms of biological role, plasma membrane sugar-proton symporter. The chain is Putative polyol transporter 1 (PLT1) from Arabidopsis thaliana (Mouse-ear cress).